The chain runs to 105 residues: Heat shock protein HspQ (105 aa).

Belongs to the HspQ family.

Its subcellular location is the cytoplasm. In terms of biological role, involved in the degradation of certain denaturated proteins, including DnaA, during heat shock stress. The chain is Heat shock protein HspQ from Blochmanniella floridana.